The primary structure comprises 499 residues: Putative alpha-galactosidase 8 (499 aa).

2 N-linked (GlcNAc...) asparagine glycosylation sites follow: asparagine 154 and asparagine 191. Aspartate 238 acts as the Nucleophile in catalysis. Asparagine 256 is a glycosylation site (N-linked (GlcNAc...) asparagine). Catalysis depends on aspartate 303, which acts as the Proton donor.

It belongs to the glycosyl hydrolase 27 family.

The protein localises to the secreted. The enzyme catalyses Hydrolysis of terminal, non-reducing alpha-D-galactose residues in alpha-D-galactosides, including galactose oligosaccharides, galactomannans and galactolipids.. Putative alpha-galactosidase involved in the degradation of simple oligosaccharides like melibiose, raffinose and stachyose, and of polymeric galacto(gluco)mannans. This is Putative alpha-galactosidase 8 (agl8) from Emericella nidulans (strain FGSC A4 / ATCC 38163 / CBS 112.46 / NRRL 194 / M139) (Aspergillus nidulans).